The sequence spans 1394 residues: MEEIPIKVAVRIRPLLCKEVLHNHQVCVRDIPNTQQIIIGRDRVFTFDFVFGKNSTQDEVYNTCIKPLVLSLIEGYNATVFAYGQTGSGKTYTIGGGHVASVVEGQKGIIPRAIQEIFQSISENPSIDFKIKVSYIEVYKEDLRDLLELETSMKDLHIREDEKGNTVIVGAKECQVESVEDVMSLLQVGNAARHTGTTQMNEHSSRSHAIFTISVCQVEKNAEAAENGEWYSHRHIVSKFHFVDLAGSERVTKTGNTGERFKESIQINSGLLALGNVISALGDPRRKSSHIPYRDAKITRLLKDSLGGSAKTVMITCVSPSSSDFDESLNSLKYANRARNIRNKPALNISPQADRMDEMEFEIKLLREALQSHQASISQASQASSENVPDQNRIHSLEEQVAQLQEECLGYQDCIEQAFAFLVDLKDAVKLNQKQQHKLQEWFSRTQEVRKAVLTPLPGNQGIGNLEEGPQHLTVLQLKRELKKYQCALAADQVVFTQKDLELEELRTQVQLMMQESKGHAVSLKEAQKVNRLQNEKIIEQQLLVDQLSAELAKRSLSVPTSAKESCGDGPDARASEKRPHTAPFESHWGHYVYIPSRQDFKKVCSSTPVYSLDQVFAGFRTRSQMLMGHLEDQDEVLHCQFSDNSDDEDSEGQEKPRVRSRSHSWAKKPGSVCSLVELSDTQAESQRSYLGNGDLKMESLQESQEINLQKLRTSELILNKAKQKMRELTINIRMKEDLIKELIKTGNNAKSVSRQYSLKVTKLEHEAEQAKVELTETRKQLQELESKDLSDVALKVKLQKEFRKKMDAAKMRVQVLQKKQQDSKKLASLSIQNEKRASELEHNVDHLKYQKVQLQRRLREEGEKKKQLDAEIKRDQQKIKELQLKAGQGEGLNPKAEDQDGFNLNRRKSPFRSGDQFQKLDEQRKWLDEEVEKVLSQRQELEMLEEDLKKREAIVSKKEALLQEKSLLENKKLRSSQALSTDGLKISARLNLLDQELSEKSLQLESSPTEEKMKISEQVQALQRERDQLQRQRNSVDERLKHGRVLSPKEEHLLFQLEEGIEALEAAIEFKNESIQSRQNSLKASFQNLSQSEANVLEKLVCLNITEIRAILFKYFNKVINLRETERKQQLQNKEMKMKVLERDNVVHELESALEHLRLQCDRRLTLQQKEHEQKMQLLLQHFKDQDGDSIIETLKNYEDKIQQLEKDLYFYKKTSRDLKKRLKDPAQGAAQWQRTLTEHHDAGDGVLNPEETTVLSEELKWASRTENTKLNGSEREVDNSSSSLKTQPLTQQIPEDGPDSLPARSSIAPSSGQLQSIADKTEARPFTHSQSPVPHQFQPVRSIGPLQGVKPVKLCRRELRQISAMELSLRRCSLGAGGRSMTADSLEDPEEN.

Positions 5 to 341 (PIKVAVRIRP…LKYANRARNI (337 aa)) constitute a Kinesin motor domain. 84–91 (GQTGSGKT) is a binding site for ATP. Coiled-coil stretches lie at residues 352 to 418 (QADR…IEQA) and 498 to 554 (QKDL…ELAK). 2 disordered regions span residues 559–582 (VPTSAKESCGDGPDARASEKRPHT) and 642–665 (FSDNSDDEDSEGQEKPRVRSRSHS). Residues 571–580 (PDARASEKRP) are compositionally biased toward basic and acidic residues. Residues serine 643, serine 646, serine 672, serine 675, and serine 704 each carry the phosphoserine modification. Coiled-coil stretches lie at residues 709–891 (LQKL…GQGE), 921–1078 (LDEQ…SIQS), 1118–1152 (NKVINLRETERKQQLQNKEMKMKVLERDNVVHELE), and 1186–1226 (DQDG…RLKD). Positions 886–916 (KAGQGEGLNPKAEDQDGFNLNRRKSPFRSGD) are disordered. The residue at position 999 (serine 999) is a Phosphoserine. Residues 1267-1280 (TENTKLNGSEREVD) are compositionally biased toward basic and acidic residues. Disordered stretches follow at residues 1267 to 1319 (TENT…LQSI) and 1325 to 1344 (ARPFTHSQSPVPHQFQPVRS). Composition is skewed to polar residues over residues 1281–1295 (NSSSSLKTQPLTQQI) and 1309–1319 (IAPSSGQLQSI). Serine 1365 and serine 1387 each carry phosphoserine.

It belongs to the TRAFAC class myosin-kinesin ATPase superfamily. Kinesin family. KIF27 subfamily. In terms of assembly, interacts with STK36.

Its subcellular location is the cytoplasm. The protein localises to the cytoskeleton. The protein resides in the cell projection. It localises to the cilium. In terms of biological role, plays an essential role in motile ciliogenesis. The polypeptide is Kinesin-like protein KIF27 (Kif27) (Mus musculus (Mouse)).